The primary structure comprises 325 residues: ATP phosphoribosyltransferase (325 aa).

It belongs to the ATP phosphoribosyltransferase family. Long subfamily. Mg(2+) is required as a cofactor.

The protein resides in the cytoplasm. It carries out the reaction 1-(5-phospho-beta-D-ribosyl)-ATP + diphosphate = 5-phospho-alpha-D-ribose 1-diphosphate + ATP. It participates in amino-acid biosynthesis; L-histidine biosynthesis; L-histidine from 5-phospho-alpha-D-ribose 1-diphosphate: step 1/9. Feedback inhibited by histidine. Its function is as follows. Catalyzes the condensation of ATP and 5-phosphoribose 1-diphosphate to form N'-(5'-phosphoribosyl)-ATP (PR-ATP). Has a crucial role in the pathway because the rate of histidine biosynthesis seems to be controlled primarily by regulation of HisG enzymatic activity. The polypeptide is ATP phosphoribosyltransferase (Bradyrhizobium diazoefficiens (strain JCM 10833 / BCRC 13528 / IAM 13628 / NBRC 14792 / USDA 110)).